Consider the following 547-residue polypeptide: DNA ligase (547 aa).

Residue Glu-244 coordinates ATP. Lys-246 acts as the N6-AMP-lysine intermediate in catalysis. The ATP site is built by Arg-251, Arg-266, Glu-295, Phe-334, Arg-405, and Lys-411.

Belongs to the ATP-dependent DNA ligase family. The cofactor is Mg(2+).

The enzyme catalyses ATP + (deoxyribonucleotide)n-3'-hydroxyl + 5'-phospho-(deoxyribonucleotide)m = (deoxyribonucleotide)n+m + AMP + diphosphate.. Its function is as follows. DNA ligase that seals nicks in double-stranded DNA during DNA replication, DNA recombination and DNA repair. The polypeptide is DNA ligase (Methanospirillum hungatei JF-1 (strain ATCC 27890 / DSM 864 / NBRC 100397 / JF-1)).